The sequence spans 235 residues: MRRVFGAKKNTEPPPSIQDASDRINKRGDSVEDKIKKLDVELCKYKEQLKKTRPGPAQEAVKARAMRVLKQKKMYEGQRDMLYNQTFNLDQVSFAAEGLKDAQQTMTALKSANKELKGMMKTVKIQDIDNLQDEMMDLMDVSSEIQESLGRSYNIPDGLDEDDLMGELDALEADMGNETEADGMPSYLQPDTETDYDSELNLPAAPTGHNGAPHGRAQAEDEFGLPAVPRASLRG.

The segment at 1–29 (MRRVFGAKKNTEPPPSIQDASDRINKRGD) is disordered. The span at 20–29 (ASDRINKRGD) shows a compositional bias: basic and acidic residues. The stretch at 99–148 (LKDAQQTMTALKSANKELKGMMKTVKIQDIDNLQDEMMDLMDVSSEIQES) forms a coiled coil. The interval 175-235 (MGNETEADGM…PAVPRASLRG (61 aa)) is disordered.

It belongs to the SNF7 family. As to quaternary structure, interacts with SKD1/VPS4 and LIP5. Interacts with VPS2.2.

It is found in the endosome. It localises to the multivesicular body membrane. Functionally, probable peripherally associated component of the endosomal sorting required for transport complex III (ESCRT-III) which is involved in multivesicular bodies (MVBs) formation and sorting of endosomal cargo proteins into MVBs. This chain is Vacuolar protein sorting-associated protein 60.1, found in Arabidopsis thaliana (Mouse-ear cress).